The following is a 210-amino-acid chain: Protein GrpE (210 aa).

Positions 191 to 210 are disordered; that stretch reads KGGPKPAEAETNSVFDEKDA.

This sequence belongs to the GrpE family. Homodimer.

It is found in the cytoplasm. Its function is as follows. Participates actively in the response to hyperosmotic and heat shock by preventing the aggregation of stress-denatured proteins, in association with DnaK and GrpE. It is the nucleotide exchange factor for DnaK and may function as a thermosensor. Unfolded proteins bind initially to DnaJ; upon interaction with the DnaJ-bound protein, DnaK hydrolyzes its bound ATP, resulting in the formation of a stable complex. GrpE releases ADP from DnaK; ATP binding to DnaK triggers the release of the substrate protein, thus completing the reaction cycle. Several rounds of ATP-dependent interactions between DnaJ, DnaK and GrpE are required for fully efficient folding. This chain is Protein GrpE, found in Rhizobium etli (strain CIAT 652).